Here is a 749-residue protein sequence, read N- to C-terminus: Small G protein signaling modulator 3 (749 aa).

Positions 113 to 304 constitute a Rab-GAP TBC domain; the sequence is GIPHGMRPQL…RIWDLFFYEG (192 aa). Phosphoserine is present on S405. The stretch at 414–438 forms a coiled coil; the sequence is EDDLEALKAKNIKQTELVADLREAI. Positions 479 to 538 constitute an SH3 domain; that stretch reads SHRRRAKALLDFERHDDDELGFRKNDIITIISQKDEHCWVGELNGLRGWFPAKFVEVLDE. The RUN domain maps to 554–717; that stretch reads GVTDLVRGTL…FAFSLSQDWE (164 aa).

It belongs to the small G protein signaling modulator family. In terms of assembly, interacts with GJA1. Interaction with GJA1 induces its degradation. Interacts (via RUN domain) with NF2 (via C-terminus). Interacts with RAB3A, RAB4A, RAB5A, RAB8A, RAB11A, RAP1A, RAP1B, RAP2A, RAP2B and PDCD6I. No interaction with RAB27A. No interaction with GJB1 or GJD2. Expressed in brain, liver, kidney and testis. Moderately expressed in heart, very weakly in lung and muscle. Not expressed in spleen.

Its subcellular location is the cytoplasm. In terms of biological role, may play a cooperative role in NF2-mediated growth suppression of cells. May act as a modulator of small G protein RAB- and RAP-mediated neuronal signal transduction and vesicular transportation pathways. The protein is Small G protein signaling modulator 3 of Rattus norvegicus (Rat).